A 737-amino-acid polypeptide reads, in one-letter code: Probable serine/threonine-protein kinase DDB_G0269628 (737 aa).

The region spanning 8–488 is the Protein kinase domain; the sequence is YKLIKDLRSG…TLQKMDTSLL (481 aa). ATP contacts are provided by residues 14-22 and Lys36; that span reads LRSGGEGKA. Disordered stretches follow at residues 155–251 and 278–298; these read NTIQ…KKCS and TTAA…SSSN. The segment covering 156-167 has biased composition (polar residues); sequence TIQHSHSSSSLV. Residues 168–229 are compositionally biased toward low complexity; the sequence is NGTTSPTNAT…PSSPSSPLSP (62 aa). Asp349 functions as the Proton acceptor in the catalytic mechanism.

It belongs to the protein kinase superfamily. NEK Ser/Thr protein kinase family. NIMA subfamily.

The enzyme catalyses L-seryl-[protein] + ATP = O-phospho-L-seryl-[protein] + ADP + H(+). It carries out the reaction L-threonyl-[protein] + ATP = O-phospho-L-threonyl-[protein] + ADP + H(+). In Dictyostelium discoideum (Social amoeba), this protein is Probable serine/threonine-protein kinase DDB_G0269628.